The primary structure comprises 746 residues: MNNNTNGEIIIPQEYLEKSECLFKELKELNINFKEVKHGLAATIKDLLEMNLENSTNILKNLFLKDKKKNYFLICTLNNKTVDLKNLSNILKTNNLRFVDENNLNNILNIQPGCLSPLAIKNDKENIVKLYFDEEIKNMQEVIIHPLHNYSSLYIKTQDVIKFCESFNHAPEYVQIKEDTTSKARVDKKEDVQEEMAKNEELQNNNNNNKNNSNSNNNNNNNNNHIKDTILKGKLLSNNEVEDNKSKDSNILGITSKKIENFSDWYTQVIVKSELIEYYDISGCYILRPAAYYIWECVQAFFNKEIKKLNVENSYFPLFVTKNKLEKEKNHIEGFSPEVAWVTKYGDSNLPEEIAIRPTSETIMYSVFPKWIRSYRDLPLKLNQWNTVVRWEFKQPTPFIRTREFLWQEGHTAHKNEEEAVKLVFDILDLYRRWYEEYLAVPIIKGIKSEGEKFGGANFTSTAEAFISENGRAIQAATSHYLGTNFAKMFKIEFEDENEVKQYVHQTSWGCTTRSIGIMIMTHGDDKGLVLPPNVSKYKVVIVPIFYKTTDENAIHSYCKDIEKILKNAQINCVYDDRASYSPGYKFNHWELRGIPIRIEVGPKDLQNNSCVIVRRDNNEKCNVKKESVLLETQQMLVDIHKNLFLKAKKKLDDSIVQVTSFSEVMNALNKKKMVLAPWCEDIATEEEIKKETQRLSLNQTNSETTLSGAMKPLCIPLDQPPMPPNMKCFWSGKPAKRWCLFGRSY.

The tract at residues 1–223 (MNNNTNGEII…NSNNNNNNNN (223 aa)) is required for editing of incorrectly charged tRNA. Over residues 181–201 (TSKARVDKKEDVQEEMAKNEE) the composition is skewed to basic and acidic residues. Residues 181–226 (TSKARVDKKEDVQEEMAKNEELQNNNNNNKNNSNSNNNNNNNNNHI) form a disordered region. Low complexity predominate over residues 204-224 (NNNNNNKNNSNSNNNNNNNNN). An L-proline-binding site is contributed by Arg-390. Residues 390-394 (RWEFK), 401-405 (RTREF), and 475-477 (QAA) each bind ATP. His-480 contacts L-proline. Residue 512–514 (TTR) coordinates ATP.

This sequence belongs to the class-II aminoacyl-tRNA synthetase family. ProS type 3 subfamily. Homodimer.

It localises to the cytoplasm. The catalysed reaction is tRNA(Pro) + L-proline + ATP = L-prolyl-tRNA(Pro) + AMP + diphosphate. Its activity is regulated as follows. Inhibited by the quinazolinone-based compound febrifugine from the Chinese plant Dichroa febrifuga which is used to treat malaria-associated fever. Also inhibited by febrifugine derivatives such as halofuginone. Functionally, catalyzes the attachment of proline to tRNA(Pro) in a two-step reaction: proline is first activated by ATP to form Pro-AMP and then transferred to the acceptor end of tRNA(Pro). Functions in trans to edit the amino acid moiety from incorrectly charged Ala-tRNA(Pro). Has no activity on correctly charged Pro-tRNA(Pro) or Ala-tRNA(Ala). The sequence is that of Proline--tRNA ligase from Plasmodium falciparum (isolate 3D7).